The sequence spans 1152 residues: Nardilysin (1152 aa).

The signal sequence occupies residues M1–A20. Disordered regions lie at residues L81–S108 and M133–T208. Residues S86, S94, and S96 each carry the phosphoserine modification. The span at T141 to E198 shows a compositional bias: acidic residues. H234 provides a ligand contact to Zn(2+). E237 (proton acceptor) is an active-site residue. 2 residues coordinate Zn(2+): H238 and E315.

It belongs to the peptidase M16 family. Interacts with BACE1 and NRG1. Zn(2+) serves as cofactor.

It is found in the mitochondrion. It localises to the cell projection. Its subcellular location is the dendrite. It catalyses the reaction Hydrolysis of polypeptides, preferably at -Xaa-|-Arg-Lys-, and less commonly at -Arg-|-Arg-Xaa-, in which Xaa is not Arg or Lys.. Functionally, cleaves peptide substrates on the N-terminus of arginine residues in dibasic pairs. Is a critical activator of BACE1- and ADAM17-mediated pro-neuregulin ectodomain shedding, involved in the positive regulation of axonal maturation and myelination. Required for proper functioning of 2-oxoglutarate dehydrogenase (OGDH). The sequence is that of Nardilysin from Pongo abelii (Sumatran orangutan).